The primary structure comprises 171 residues: Protein phosphatase 1 regulatory subunit 1A (171 aa).

Residue Met1 is modified to N-acetylmethionine. Residues 9 to 12 are essential for activity; that stretch reads KIQF. Positions 17-171 are disordered; the sequence is LEPHLDPEAA…PLDSQGASLV (155 aa). The span at 19–29 shows a compositional bias: basic and acidic residues; that stretch reads PHLDPEAAEQI. Thr35 carries the post-translational modification Phosphothreonine; by PKA. An essential for activity region spans residues 42–54; sequence TSDQSSPEVDEDR. A phosphoserine mark is found at Ser43, Ser46, Ser47, and Ser67. The segment covering 122–133 has biased composition (polar residues); that stretch reads GSASRPDTSGTA. Over residues 137–148 the composition is skewed to basic and acidic residues; that stretch reads AESKPKTQEQRG. The segment at 143 to 171 is interaction with PPP1R15A; that stretch reads TQEQRGVEPSTEDLSAHMLPLDSQGASLV.

This sequence belongs to the protein phosphatase inhibitor 1 family. As to quaternary structure, interacts with PPP1R15A. In terms of processing, phosphorylation of Thr-35 is required for activity.

Inhibitor of protein-phosphatase 1. This protein may be important in hormonal control of glycogen metabolism. Hormones that elevate intracellular cAMP increase I-1 activity in many tissues. I-1 activation may impose cAMP control over proteins that are not directly phosphorylated by PKA. Following a rise in intracellular calcium, I-1 is inactivated by calcineurin (or PP2B). Does not inhibit type-2 phosphatases. In Rattus norvegicus (Rat), this protein is Protein phosphatase 1 regulatory subunit 1A (Ppp1r1a).